The chain runs to 105 residues: MTWDIEQFNKLVSAEEYFEFFQLPYDPRVVQVSRLHILKQFSQSIQEIDANNSQASQAEKLDLYCTALKQAYEVFLSSTPLEQKLFKVFKQKPKNIVMLTEIATS.

It belongs to the NifW family.

Functionally, may protect the nitrogenase Fe-Mo protein from oxidative damage. This is Nitrogenase-stabilizing/protective protein NifW 2 (nifW2) from Trichormus variabilis (strain ATCC 29413 / PCC 7937) (Anabaena variabilis).